Reading from the N-terminus, the 1666-residue chain is Cortactin-binding protein 2 (1666 aa).

Disordered stretches follow at residues 1–25, 202–224, 366–411, 457–481, and 501–619; these read MATD…APAE, EKKR…AEME, IVSS…PAIQ, NANN…SPTS, and RFTS…PKPS. Residues 120–274 adopt a coiled-coil conformation; sequence KMQERMSTQL…MTEQLKRGND (155 aa). Composition is skewed to low complexity over residues 385-398 and 457-468; these read GPST…PSST and NANNDQDQNGNN. Over residues 469–481 the composition is skewed to polar residues; sequence TQSPPSRDVSPTS. Residue Arg-501 is modified to Asymmetric dimethylarginine. ANK repeat units lie at residues 712-742, 746-775, 779-808, 812-841, 845-874, and 915-945; these read GRPT…DINH, DGHS…QVNA, DGFT…NINH, EGQT…DRSV, DGWT…PACG, and EGWT…EPER. Phosphoserine is present on Ser-1527. The span at 1545-1566 shows a compositional bias: basic and acidic residues; the sequence is SESDISKIADTRDDLRRFDSSR. 2 disordered regions span residues 1545–1601 and 1620–1666; these read SESD…RSNR and RSKI…KPNQ. Residues 1585-1594 are compositionally biased toward polar residues; that stretch reads KEVSPLSSHQ. Residues 1627-1641 show a composition bias toward low complexity; the sequence is SQNTKRSSSSSNTRQ. Residues 1648-1666 show a composition bias toward basic and acidic residues; that stretch reads SKDEIWNLRNNEQIEKPNQ.

As to quaternary structure, interacts with CTTN/cortactin SH3 domain. Interacts with STRN, STRN4/zinedin and MOB4/phocein; this interactions mediate the association with the STRIPAK core complex and may regulate dendritic spine distribution of the STRIPAK complex in hippocampal neurons. Activation of glutamate receptors weakens the interaction with STRN and STRN4.

It is found in the cytoplasm. Its subcellular location is the cell cortex. It localises to the cell projection. The protein resides in the dendritic spine. In terms of biological role, regulates the dendritic spine distribution of CTTN/cortactin in hippocampal neurons, and thus controls dendritic spinogenesis and dendritic spine maintenance. Associates with the striatin-interacting phosphatase and kinase (STRIPAK) core complex to regulate dendritic spine distribution of the STRIPAK complex in hippocampal neurons. The chain is Cortactin-binding protein 2 (CTTNBP2) from Echinops telfairi (Lesser hedgehog tenrec).